The sequence spans 346 residues: Upstream stimulatory factor 2 (346 aa).

2 disordered regions span residues 1–44 (MDML…PGAE) and 215–244 (APRTHPYSPKIDGTRTPRDERRRAQHNEVE). Low complexity predominate over residues 11-20 (ASSATAAAAA). The span at 226–244 (DGTRTPRDERRRAQHNEVE) shows a compositional bias: basic and acidic residues. Residues 235 to 290 (RRRAQHNEVERRRRDKINNWIVQLSKIIPDCHADNSKTGASKGGILSKACDYIREL) form the bHLH domain. Residues 307-328 (LQMDNELLRQQIEELKNENALL) are leucine-zipper.

In terms of assembly, efficient DNA binding requires dimerization with another bHLH protein. Binds DNA as a homodimer or a heterodimer (USF1/USF2). Interacts with MAF.

It is found in the nucleus. Its function is as follows. Transcription factor that binds to a symmetrical DNA sequence (E-boxes) (5'-CACGTG-3') that is found in a variety of viral and cellular promoters. The polypeptide is Upstream stimulatory factor 2 (Usf2) (Mus musculus (Mouse)).